Consider the following 439-residue polypeptide: MKIYRSTLLHTPASPFAVPDALQTFSDGALAVGDTGTIAHLGTFTEVLAEVRAACPDAEVHDLRGGVLLPGFIDTHVHYPQVRVLGGLGMALLEWLDRNTLPEEARLADAAYARTIAGEFLHGLASHGTTTALVFGSHFAGAMDEFFAEAAARGLRVVAGQVVSDRLLRPELHTTPERAYAEGKALIERWHGQGRSLYAVTPRFSLSASEGILDACAALLTEFPDVRFTSHINENNQEIEVVRGLFPGARDYLDTYERAGLVTPRSVFAHNVHPNERELGVLAAQRCSVAHCPCSNSALGSGLFPLRRHLAAGVHVALGTDVGGGTGFSLLKEGLQAYFMQQLLGEEGAALSPAHLLYLATLAGAQALGLDGQVGDFTPGKQFDAVWLRPRAGSTLATVLAHAESEERTLAALFALGTGDDVERVWVGGGVVFAREAEA.

Positions 76 and 78 each coordinate Zn(2+). Substrate is bound by residues 78–81 (HYPQ), 203–204 (RF), 231–234 (HINE), and Asp321. His231 and Asp321 together coordinate Zn(2+).

This sequence belongs to the metallo-dependent hydrolases superfamily. ATZ/TRZ family. It depends on Zn(2+) as a cofactor.

The catalysed reaction is guanine + H2O + H(+) = xanthine + NH4(+). It functions in the pathway purine metabolism; guanine degradation; xanthine from guanine: step 1/1. Its function is as follows. Catalyzes the hydrolytic deamination of guanine, producing xanthine and ammonia. This chain is Probable guanine deaminase (guaD), found in Deinococcus radiodurans (strain ATCC 13939 / DSM 20539 / JCM 16871 / CCUG 27074 / LMG 4051 / NBRC 15346 / NCIMB 9279 / VKM B-1422 / R1).